The primary structure comprises 738 residues: MPDDVGPAEAEVSGAVSESDNEYDETEATTKDDDEKMAERSAASEGVETNGDQKKKYDPKDPLRPRRKKARRACYACQRAHLTCGDERPCQRCIKRGLAEACQDGVRKKAKYLHDAPPEALRPVLGPNYNPAAAVSVRNGHRHPSNAGSDAGSSVGTFFSQSTQYPVFSSAATQLGSIPENLPFPQQSPVSPTFQASGNPQLGSIGVNSVSSPMNSFPPALFDPSNPAIFNFNLEGLNFGSQYGAMEFGMLGHMSSGAAETPPRDPSISQQGTAGDVGFNPSGVFGNGLNQFDKVYDNNTGLMSDFLTLDAHSSGLYSQGNLQHGLPHAYAIPAGPTSLQSPSTENNSPQPTGFGFESPTTTNYTGVPGAGGNQPGSQQSRTQKPKTPALGKLGPQSVLGKRQRDPSSIYEAVKEPFQYVASFHKLISLLQNRFSGASTISIVRSLASIRPSFMSCMKTLNRADLIFMEKSFQRALFEHEEFMHQSPSPAIACRRTGEIAGVNKEFTALTGWTKDVLLGKTLNLNANMGGTNSDTLSVSSKGGRGGIVGTTPRLKPLNPEQGPNADGQQQQSQQQKEQPQPVFLAELMDEASVTQFYEDYAQLAFTHSRGTVVRKCRLLKYRTQENMDAAAAAASSVPTTAGGSGSSNGTVVNGGPDSSPAGKTERERSTGANVASNSILSNRVAKIDGEHGISKLERDGKLECSYTWTIKRDVFDIPMIIMINFLPCYYRSHNQLAV.

The interval 1-65 (MPDDVGPAEA…KYDPKDPLRP (65 aa)) is disordered. Composition is skewed to basic and acidic residues over residues 28-39 (ATTKDDDEKMAE) and 51-64 (GDQK…DPLR). A DNA-binding region (zn(2)-C6 fungal-type) is located at residues 74 to 102 (CYACQRAHLTCGDERPCQRCIKRGLAEAC). 4 disordered regions span residues 255–278 (SSGA…GDVG), 328–404 (HAYA…KRQR), 530–579 (GTNS…KEQP), and 636–673 (SVPT…TGAN). 2 stretches are compositionally biased toward polar residues: residues 337–351 (TSLQ…SPQP) and 530–540 (GTNSDTLSVSS). The PAS domain occupies 475–546 (ALFEHEEFMH…SVSSKGGRGG (72 aa)). Composition is skewed to low complexity over residues 568–579 (QQQQSQQQKEQP) and 636–655 (SVPT…VNGG).

The protein belongs to the ERT1/acuK family.

The protein localises to the nucleus. Transcription factor which regulates nonfermentable carbon utilization. Activator of gluconeogenetic genes. The chain is Transcription activator of gluconeogenesis SMAC_06113 from Sordaria macrospora (strain ATCC MYA-333 / DSM 997 / K(L3346) / K-hell).